The following is an 850-amino-acid chain: MSGESGQPQPGPSHAGLYLEHPERDQAGVPGGVIRRADSQRRRSWIQKVIEQITGSPRQCVTLSEVVPVTVLAVQRYLLEDEPRDTVPKPPLYCYDVTISDGVYQEKCYLDPSLNFLVYQNILKVGIEMRISRVSCLYNEKRLGQGILCIDKVHCGESLDVISVETPFRNRAHEEKPERPLRGGKSHYLALWNNEDPYGDIWKTNKQPEEFNFNNIKIISLSHLELTWNSRKNFPALLVRVLHKSKLRYYGKPNKKMIEPYQTYLEVADSSGMVSVILWNALCPEWYKSLRVGLVLLLQDYTVKKSYPLRIQPDPADPQMKLISTMEICLNLRDPPTNIVIIPEKQLKSEWKLPKLINRFITRSELDDMPEKSICDVIGLLSFVGRVQRSKKKENSEDFWSYRWIHITDGTSEQPFIVQLFSTSQPEVFENIYPMTYFVCTQLKVVRNNSQVPKLLYLTTTNESRALTTGGHRGLPYTYDTKAKKIIQWIKTKTNLEAKNTVIGGYYPYPPVPETFSKYSRFIKAESLLTTISEVKKVIEDLQYREQKRIAIQGIITAIKYIPYKHSAGSAPAPEAFWNASRPSTSQAAGKEDHCHERGSKRSQDDRPMGSQHFQYTSKVLSLCAKRKILQGPSANPVPVPQPHSSAQMKGSKHNTPSQESSTAYTTGKSRRITNDRWESQLWQDKKFSLRDHLHYGHVDPESIPRKFILEHEKFLTQQFNSQPAKYIPPEGKPPKLDEFQSARSLGHFEVTILGLNHEIAIDVAFLPMYSPEDVQASQIDTFLTCMNFSCVYPPAAPLSGRLPDPKAVAGDIVKAAADLDRVHIIGILDICNLGNNKVEVCLQKIYTPE.

The tract at residues 1 to 31 is disordered; sequence MSGESGQPQPGPSHAGLYLEHPERDQAGVPG. The OB DNA-binding region spans 228–331; it reads WNSRKNFPAL…LISTMEICLN (104 aa). 2 disordered regions span residues 575–612 and 632–671; these read EAFWNASRPSTSQAAGKEDHCHERGSKRSQDDRPMGSQ and GPSANPVPVPQPHSSAQMKGSKHNTPSQESSTAYTTGKSR. Over residues 590–608 the composition is skewed to basic and acidic residues; that stretch reads GKEDHCHERGSKRSQDDRP. Over residues 643–668 the composition is skewed to polar residues; that stretch reads PHSSAQMKGSKHNTPSQESSTAYTTG.

The protein localises to the chromosome. In terms of biological role, single-stranded DNA-binding protein recruited to replication forks to maintain genome stability. Prevents fork collapse by antagonizing the accumulation of RAD51 at forks to ensure the proper balance of fork remodeling and protection without interfering with the capacity of cells to complete homologous recombination of double-strand breaks. The chain is RPA-related protein RADX from Mus musculus (Mouse).